A 349-amino-acid polypeptide reads, in one-letter code: tRNA pseudouridine synthase D (349 aa).

Catalysis depends on Asp-77, which acts as the Nucleophile. Residues 151–309 (GVPNYFGEQR…ETIDESTLKL (159 aa)) enclose the TRUD domain.

It belongs to the pseudouridine synthase TruD family.

The enzyme catalyses uridine(13) in tRNA = pseudouridine(13) in tRNA. Functionally, responsible for synthesis of pseudouridine from uracil-13 in transfer RNAs. The chain is tRNA pseudouridine synthase D from Pseudoalteromonas translucida (strain TAC 125).